A 350-amino-acid polypeptide reads, in one-letter code: C4-dicarboxylate-binding protein DctB (350 aa).

The N-terminal stretch at 1–18 is a signal peptide; it reads MKSLLACLALMIAGIATA.

It belongs to the bacterial solute-binding protein 7 family.

It is found in the secreted. Part of the binding-protein-dependent transport system for uptake of C4-dicarboxylates. Responsible for growth on fumarate and succinate but not malate. Is not directly involved in C4-dicarboxylate uptake, but plays a sensory role in the DctS/DctR two-component system which regulates the expression of the dctA C4-dicarboxylate transporter. This is C4-dicarboxylate-binding protein DctB (dctB) from Bacillus subtilis (strain 168).